A 96-amino-acid polypeptide reads, in one-letter code: Small ribosomal subunit protein bS6 (96 aa).

It belongs to the bacterial ribosomal protein bS6 family.

Binds together with bS18 to 16S ribosomal RNA. This chain is Small ribosomal subunit protein bS6, found in Streptococcus suis (strain 98HAH33).